The primary structure comprises 228 residues: UPF0758 protein SH1266 (228 aa).

The 123-residue stretch at 102-224 (KITSPSDVSN…YASLVEEGYF (123 aa)) folds into the MPN domain. Zn(2+)-binding residues include His-173, His-175, and Asp-186. Residues 173–186 (HNHPSGDVTPSKED) carry the JAMM motif motif.

This sequence belongs to the UPF0758 family.

The protein is UPF0758 protein SH1266 of Staphylococcus haemolyticus (strain JCSC1435).